A 385-amino-acid polypeptide reads, in one-letter code: Glucans biosynthesis protein C (385 aa).

10 helical membrane-spanning segments follow: residues 17–37, 60–80, 91–111, 137–157, 173–193, 212–232, 239–259, 274–294, 311–331, and 338–358; these read AWLMLLGIPFHISLIYSSHTW, MQVFFVISGYFSYMLFLRYPL, VGIPMLTAIPLLTLPQFIMLQ, ISHLWFLLVLVVMTTLCVWIF, KFSMVKLSVIFLCLGIGYAVI, FIVMQTLFYLPFFILGALAFI, LFTTPSRGCTLAAALAFVAYL, TESVITMVLGLWMVNVVFSFG, ASLFIYLVHHPLTLFFGAYIT, and WLGFLCGLIFVVGIAIILYEI.

Belongs to the acyltransferase 3 family. OpgC subfamily.

The protein localises to the cell membrane. Its pathway is glycan metabolism; osmoregulated periplasmic glucan (OPG) biosynthesis. Functionally, necessary for the succinyl substitution of periplasmic glucans. Could catalyze the transfer of succinyl residues from the cytoplasmic side of the membrane to the nascent glucan backbones on the periplasmic side of the membrane. This is Glucans biosynthesis protein C from Escherichia coli (strain K12 / MC4100 / BW2952).